The sequence spans 326 residues: Mitochondrial glycine transporter (326 aa).

Solcar repeat units lie at residues 45–134, 141–225, and 237–321; these read HPVI…SKQY, PTAL…TRTA, and LIPL…MMAR. Transmembrane regions (helical) follow at residues 51–76, 109–135, 147–172, 200–223, 241–267, and 296–314; these read FLCGSISGTCSTLLFQPLDLLKTRLQ, GMSPSIVRCVPGVGIYFGTLYSSKQYF, VILGMGSRSVAGVCMSPITVIKTRYE, GLTATLLRDAPFSGLYLMFYSQTR, INFSCGIFAGVLASLVTQPADVIKTHM, and GSVPRALRRTLMAAMAWTV.

It belongs to the mitochondrial carrier (TC 2.A.29) family. SLC25A38 subfamily.

Its subcellular location is the mitochondrion inner membrane. The enzyme catalyses glycine(in) = glycine(out). Functionally, mitochondrial glycine transporter that imports glycine into the mitochondrial matrix. Plays an important role in providing glycine for the first enzymatic step in heme biosynthesis, the condensation of glycine with succinyl-CoA to produce 5-aminolevulinate (ALA) in the mitochondrial matrix. Required during erythropoiesis. Its function is as follows. Plays a role as pro-apoptotic protein that induces caspase-dependent apoptosis. This is Mitochondrial glycine transporter from Mus musculus (Mouse).